A 413-amino-acid polypeptide reads, in one-letter code: uncharacterized protein (413 aa).

Residues 3–155 form the N-acetyltransferase domain; sequence MEPRVLRREE…SRVRLSVPAG (153 aa). Acetyl-CoA is bound by residues 86 to 88, 94 to 99, and 122 to 123; these read VSV, RRGVLT, and SE. Tyrosine 127 functions as the Proton donor in the catalytic mechanism. The active-site Proton acceptor; via carboxylate is phenylalanine 413.

Belongs to the acetyltransferase Eis family. In terms of assembly, homohexamer; trimer of dimers.

This is an uncharacterized protein from Streptomyces coelicolor (strain ATCC BAA-471 / A3(2) / M145).